The chain runs to 921 residues: uncharacterized protein (921 aa).

Positions 334–628 (MTKRKFLSID…NLKSIYYDFF (295 aa)) are kinase-like. A compositionally biased stretch (low complexity) spans 401–494 (GSSEWSFGSS…NNNNSDGSSG (94 aa)). Disordered stretches follow at residues 401–499 (GSSE…DNRN) and 664–711 (NLYS…NSNS).

This is an uncharacterized protein from Dictyostelium discoideum (Social amoeba).